We begin with the raw amino-acid sequence, 76 residues long: DNA-directed RNA polymerase subunit omega (76 aa).

The protein belongs to the RNA polymerase subunit omega family. The RNAP catalytic core consists of 2 alpha, 1 beta, 1 beta' and 1 omega subunit. When a sigma factor is associated with the core the holoenzyme is formed, which can initiate transcription.

It catalyses the reaction RNA(n) + a ribonucleoside 5'-triphosphate = RNA(n+1) + diphosphate. Functionally, promotes RNA polymerase assembly. Latches the N- and C-terminal regions of the beta' subunit thereby facilitating its interaction with the beta and alpha subunits. This is DNA-directed RNA polymerase subunit omega from Staphylococcus carnosus (strain TM300).